The primary structure comprises 272 residues: MKLDTSGLESTAPIFRRSDFVFDGLQMTPSFDLPNPTDFDGFQKEAVQMVKPAKGTTTLAFIFKHGVMVAADSRASMGGYISSQSVKKIIEINPYMLGTMAGGAADCQFWHRNLGIKCRLHELANKRRISVTGASKLLANILYNYRGMGLSVGTMIAGWDETGPGLYYVDSEGGRLKGMRFSVGSGSPYAYGVLDNGYKYDMTVEEASELARRAIYHATYRDGASGGVVSVYHVGPDGWKKVTGDDVGDLHFQYYPVVPATVEQEMVEVVGA.

The propeptide at 1–55 (MKLDTSGLESTAPIFRRSDFVFDGLQMTPSFDLPNPTDFDGFQKEAVQMVKPAKG) is removed in mature form. The Nucleophile role is filled by threonine 56.

This sequence belongs to the peptidase T1B family. In terms of assembly, the 26S proteasome consists of a 20S proteasome core and two 19S regulatory subunits. The 20S proteasome core is composed of 28 subunits that are arranged in four stacked rings, resulting in a barrel-shaped structure. The two end rings are each formed by seven alpha subunits, and the two central rings are each formed by seven beta subunits. The catalytic chamber with the active sites is on the inside of the barrel.

It localises to the cytoplasm. It is found in the nucleus. It catalyses the reaction Cleavage of peptide bonds with very broad specificity.. Its function is as follows. The proteasome is a multicatalytic proteinase complex which is characterized by its ability to cleave peptides with Arg, Phe, Tyr, Leu, and Glu adjacent to the leaving group at neutral or slightly basic pH. The proteasome has an ATP-dependent proteolytic activity. This Spinacia oleracea (Spinach) protein is Proteasome subunit beta type-5.